An 80-amino-acid chain; its full sequence is Exodeoxyribonuclease 7 small subunit (80 aa).

It belongs to the XseB family. As to quaternary structure, heterooligomer composed of large and small subunits.

Its subcellular location is the cytoplasm. The catalysed reaction is Exonucleolytic cleavage in either 5'- to 3'- or 3'- to 5'-direction to yield nucleoside 5'-phosphates.. Bidirectionally degrades single-stranded DNA into large acid-insoluble oligonucleotides, which are then degraded further into small acid-soluble oligonucleotides. In Edwardsiella ictaluri (strain 93-146), this protein is Exodeoxyribonuclease 7 small subunit.